A 329-amino-acid polypeptide reads, in one-letter code: Helicase VP6-A (329 aa).

2 disordered regions span residues 28–130 (NLVD…TNGG) and 189–232 (DLRR…SEEP). 3 stretches are compositionally biased toward basic and acidic residues: residues 36-58 (EGGKEDKTEPKEESKAEGSKDGE), 65-83 (GQKEEGGKETKDADVDRRI), and 96-109 (SGERANENANRGDG). Lysine 110 contacts ATP. Positions 110–129 (KVGGGGGDADAGVGATGTNG) are enriched in gly residues. Composition is skewed to basic and acidic residues over residues 189-207 (DLRRKEKNGTHAKAVERGG) and 215-232 (HGDAQREGVEEEKTSEEP).

This sequence belongs to the reoviruses VP6 family. As to quaternary structure, homohexamer.

The protein localises to the virion. It carries out the reaction ATP + H2O = ADP + phosphate + H(+). ATP dependent RNA helicase essential for RNA packaging and viral transcription. Possesses ss- and dsRNA-binding capacity. This chain is Helicase VP6-A (Segment-9), found in Bluetongue virus 10 (isolate USA) (BTV 10).